A 641-amino-acid polypeptide reads, in one-letter code: MSSKGLKPQKSTKRKDTDSSAKFDSLKSKKPKLVSGEQQQHVKPKFGKPKSAGDKEQSTNLSKKERRVQAKELTEARKKKRKPHYNLEQELVSLWEKMRRRNIGKEDRSKLISEAIRKMKGKVPEIAVSHVSSRVLQTCVKFCSQAEKDVLFTELQPQFLNLASNKYAVHFIQKMLDGASKQQLAACISSLRGHVAPLLRHVFGSLVVEHAYHLGSAAQKQELLAELYSTELQLFKGLTTSNEKTVVDIIAKLGLQKGAVNRHMTAIIQPILEKGIVDHTITHKLLIEYLTIADKTSAADVLQLLTGSLLLRMVHTRDGSRLAMLSIKHGSAKERKKIIKAMKEHVKKMAFDQFGSMVLACIFSIVDDTKLVTKIIVRELEATLKDLVMDKNGRRPLLQLLHPNSSRYLSHDDLAALDLSVPSLCSMDKSETSSKTKDTDGNEIGEETKDEQEDTVAEHSDHEENVTAMGGKKDPLVRRQELLVNSGLAERLIDVCVENAEEFLQSKFGNEVMYEVAIGGSDGILCPSLSEKLCELYEAISSVAAEPKPQESEKDSEHILENFHSSRTIRRLVLNRPGFASILFKKALSGKCRSWAQGHCSKILSAFVETEDVQVREMAKTELQVLVNEGTLKISATKKPE.

Positions 1–82 are disordered; sequence MSSKGLKPQK…LTEARKKKRK (82 aa). Positions 9–404 constitute a PUM-HD domain; the sequence is QKSTKRKDTD…RPLLQLLHPN (396 aa). 2 stretches are compositionally biased toward basic and acidic residues: residues 14 to 27 and 67 to 76; these read RKDTDSSAKFDSLK and RVQAKELTEA. Pumilio repeat units lie at residues 118-153, 154-189, 190-225, 303-340, and 341-378; these read KMKGKVPEIAVSHVSSRVLQTCVKFCSQAEKDVLFT, ELQPQFLNLASNKYAVHFIQKMLDGASKQQLAACIS, SLRGHVAPLLRHVFGSLVVEHAYHLGSAAQKQELLA, QLLTGSLLLRMVHTRDGSRLAMLSIKHGSAKERKKIIK, and AMKEHVKKMAFDQFGSMVLACIFSIVDDTKLVTKIIVR. The interval 427–468 is disordered; that stretch reads MDKSETSSKTKDTDGNEIGEETKDEQEDTVAEHSDHEENVTA. Positions 428-440 are enriched in basic and acidic residues; it reads DKSETSSKTKDTD. The span at 441 to 455 shows a compositional bias: acidic residues; it reads GNEIGEETKDEQEDT. The segment covering 456–468 has biased composition (basic and acidic residues); that stretch reads VAEHSDHEENVTA.

The protein resides in the nucleus. It localises to the nucleolus. Sequence-specific RNA-binding protein that regulates translation and mRNA stability by binding the 3'-UTR of target mRNAs. The chain is Pumilio homolog 24 (APUM24) from Arabidopsis thaliana (Mouse-ear cress).